We begin with the raw amino-acid sequence, 856 residues long: MFWKFDLHTSSHLDTLLEKEDLSLPELLDEEDVLQECKVVNRKLLDFLLQPSHLQAMVAWVTQEPPASGEERLRYKYPSVACEILTSDVPQINDALGADESLLNRLYGFLQSGDSLNPLLASFFSKVMGILINRKTDQLVSFLRKKDDFVDLLLRHIGTSAIMDLLLRLLTCVERPQLRQDVFNWLNEEKIVQRLIEQIHPSKDDNQHSNASQSLCDIIRLSREQMIQGQDSPEPDQLLATLEKQETIEQLLSNMFEGEQCQSVIVSGIQVLLTLLEPRRPRSDSVTMNNFFSSVDGQLELLAQGALDDALSSMGALHALRPRLDRFHQLLLEPPKLEPLQMTWGSLAPPLGNTRLHVVKLLASALSANAAALTQELLVLDVPNTLLDLFFHYVFNNFLHAQVEVCVSAMLSSGPPPDSSSETPVPNPIVKHLLQHCRLVERILASWEENDRVQSGGGPRKGYMGHLTRVANAVVQNAEQGPNAEQLGQLLKELPEEQQQRWEAFVSGPLAETNKKNTVDLVNTHHLHSSSDDEDDRLKEFNFPEEAVLQQAFMDFQMQRMTSAFIDHFGFNDEEFGEQEESVNAPFDKTANITFSLNADDENPNANLLEICYKDRIQQFDDEEEEEEEGQGSAESDGEYGAWQGSQPVRASQASQPPGVRSGGSTDSEEEDEEEDEEEDEGAEQAACGRTSPSSFPSPSTQPPGPSWTATFDTVPMDAPTGPPVSKEADMSSIQIPSSPPAHGSPQLRSQDPTHPSAPQEVTDSSKVAEPLAPCQALVSVADVQATLHGMRSAPSSLDSATRDPSTSVPDFKAHQSPQTMEGKRSPEHLGLPQSQSALEMPNGSTPGGPISSGSQ.

The interaction with PPP6C stretch occupies residues 10 to 403; it reads SSHLDTLLEK…VFNNFLHAQV (394 aa). A Phosphoserine modification is found at serine 232. Threonine 524 carries the phosphothreonine modification. Phosphoserine is present on residues serine 529, serine 530, and serine 531. The span at 621-630 shows a compositional bias: acidic residues; sequence DDEEEEEEEG. Disordered stretches follow at residues 621-770 and 792-856; these read DDEE…KVAE and RSAP…SGSQ. 2 positions are modified to phosphoserine: serine 633 and serine 636. Over residues 644-656 the composition is skewed to polar residues; the sequence is QGSQPVRASQASQ. Residues 667–683 are compositionally biased toward acidic residues; it reads DSEEEDEEEDEEEDEGA. Phosphoserine occurs at positions 698 and 739. Residues 794 to 809 show a composition bias toward polar residues; the sequence is APSSLDSATRDPSTSV. Residue serine 826 is modified to Phosphoserine. The segment covering 842 to 856 has biased composition (low complexity); that stretch reads PNGSTPGGPISSGSQ.

It belongs to the SAPS family. In terms of assembly, protein phosphatase 6 (PP6) holoenzyme is proposed to be a heterotrimeric complex formed of the catalytic subunit, a SAPS domain-containing subunit (PP6R) and an ankyrin repeat-domain containing regulatory subunit (ARS). Interacts with PPP6C and NFKBIE. Interacts with ANKRD28, ANKRD44 and ANKRD52. Ubiquitous with highest expression in lung, spleen and bladder.

It is found in the cytoplasm. Its function is as follows. Regulatory subunit of protein phosphatase 6 (PP6). May function as a scaffolding PP6 subunit. Involved in the PP6-mediated dephosphorylation of NFKBIE opposing its degradation in response to TNF-alpha. The sequence is that of Serine/threonine-protein phosphatase 6 regulatory subunit 1 (Ppp6r1) from Mus musculus (Mouse).